The primary structure comprises 491 residues: HEPACAM family member 2 (491 aa).

Residues 1-18 (MWLRVFTAFLSFTAGACS) form the signal peptide. N-linked (GlcNAc...) asparagine glycans are attached at residues Asn-73, Asn-117, and Asn-153. 2 Ig-like C2-type domains span residues 137–221 (PVVQ…SDII) and 223–319 (PTIY…THFT). 2 cysteine pairs are disulfide-bonded: Cys-158–Cys-207 and Cys-258–Cys-303. A glycan (N-linked (GlcNAc...) asparagine) is linked at Asn-308. A helical transmembrane segment spans residues 340–360 (LASITGISLFLIISMCLLFLW). The Cytoplasmic segment spans residues 361-491 (KKFQPYKVIK…GKHSRAKQCI (131 aa)). Polar residues predominate over residues 444–454 (QQQDHPESSSQ). Disordered stretches follow at residues 444–466 (QQQDHPESSSQDGEEDACLDRHD) and 472–491 (ELGHCKEQDKGKHSRAKQCI). The span at 472–482 (ELGHCKEQDKG) shows a compositional bias: basic and acidic residues.

Poly-ADP-ribosylated (PARsylated) by tankyrase TNKS during late G2 and prophase, leading to translocation to mitotic centrosomes. Post-translationally, N-glycosylated.

It localises to the golgi apparatus membrane. The protein localises to the cytoplasm. The protein resides in the cytoskeleton. Its subcellular location is the spindle. It is found in the microtubule organizing center. It localises to the centrosome. The protein localises to the midbody. Required during prometaphase for centrosome maturation. Following poly-ADP-ribosylation (PARsylation) by TNKS, translocates from the Golgi apparatus to mitotic centrosomes and plays a key role in the formation of robust microtubules for prompt movement of chromosomes: anchors AKAP9/CG-NAP, a scaffold protein of the gamma-tubulin ring complex and promotes centrosome maturation. This Bos taurus (Bovine) protein is HEPACAM family member 2 (HEPACAM2).